Here is a 100-residue protein sequence, read N- to C-terminus: MELTPREKDKLLIFTAALLAERRKGRGLKLNYPEAVAFISAAIMEGARDGKTVADLMHYGTTLLTRNDVMDGVAEMIPDIQVEATFPDGTKLVTVHHPIV.

The protein belongs to the urease gamma subunit family. Heterotrimer of UreA (gamma), UreB (beta) and UreC (alpha) subunits. Three heterotrimers associate to form the active enzyme.

It localises to the cytoplasm. It catalyses the reaction urea + 2 H2O + H(+) = hydrogencarbonate + 2 NH4(+). The protein operates within nitrogen metabolism; urea degradation; CO(2) and NH(3) from urea (urease route): step 1/1. In Ralstonia pickettii (strain 12J), this protein is Urease subunit gamma.